The primary structure comprises 364 residues: Fructose-bisphosphate aldolase B (364 aa).

The substrate site is built by Arg-56 and Lys-147. The active-site Proton acceptor is the Glu-188. Catalysis depends on Lys-230, which acts as the Schiff-base intermediate with dihydroxyacetone-P.

It belongs to the class I fructose-bisphosphate aldolase family. In terms of assembly, homotetramer.

The protein localises to the cytoplasm. Its subcellular location is the cytoskeleton. It is found in the microtubule organizing center. The protein resides in the centrosome. It localises to the centriolar satellite. The enzyme catalyses beta-D-fructose 1,6-bisphosphate = D-glyceraldehyde 3-phosphate + dihydroxyacetone phosphate. It participates in carbohydrate degradation; glycolysis; D-glyceraldehyde 3-phosphate and glycerone phosphate from D-glucose: step 4/4. The protein is Fructose-bisphosphate aldolase B (aldob) of Sparus aurata (Gilthead sea bream).